Reading from the N-terminus, the 629-residue chain is tRNA uridine 5-carboxymethylaminomethyl modification enzyme MnmG (629 aa).

Residue 13-18 (GGGHAG) coordinates FAD. 273–287 (GPRYCPSIEDKVNRF) serves as a coordination point for NAD(+).

The protein belongs to the MnmG family. As to quaternary structure, homodimer. Heterotetramer of two MnmE and two MnmG subunits. FAD is required as a cofactor.

Its subcellular location is the cytoplasm. Its function is as follows. NAD-binding protein involved in the addition of a carboxymethylaminomethyl (cmnm) group at the wobble position (U34) of certain tRNAs, forming tRNA-cmnm(5)s(2)U34. The polypeptide is tRNA uridine 5-carboxymethylaminomethyl modification enzyme MnmG (Shewanella pealeana (strain ATCC 700345 / ANG-SQ1)).